The following is a 357-amino-acid chain: UDP-N-acetylglucosamine--N-acetylmuramyl-(pentapeptide) pyrophosphoryl-undecaprenol N-acetylglucosamine transferase (357 aa).

Residues 11-13 (TGG), Asn123, Arg159, Ser187, Ile241, 260-265 (ALTVAE), and Gln286 each bind UDP-N-acetyl-alpha-D-glucosamine.

This sequence belongs to the glycosyltransferase 28 family. MurG subfamily.

The protein resides in the cell inner membrane. The catalysed reaction is di-trans,octa-cis-undecaprenyl diphospho-N-acetyl-alpha-D-muramoyl-L-alanyl-D-glutamyl-meso-2,6-diaminopimeloyl-D-alanyl-D-alanine + UDP-N-acetyl-alpha-D-glucosamine = di-trans,octa-cis-undecaprenyl diphospho-[N-acetyl-alpha-D-glucosaminyl-(1-&gt;4)]-N-acetyl-alpha-D-muramoyl-L-alanyl-D-glutamyl-meso-2,6-diaminopimeloyl-D-alanyl-D-alanine + UDP + H(+). It functions in the pathway cell wall biogenesis; peptidoglycan biosynthesis. Its function is as follows. Cell wall formation. Catalyzes the transfer of a GlcNAc subunit on undecaprenyl-pyrophosphoryl-MurNAc-pentapeptide (lipid intermediate I) to form undecaprenyl-pyrophosphoryl-MurNAc-(pentapeptide)GlcNAc (lipid intermediate II). The chain is UDP-N-acetylglucosamine--N-acetylmuramyl-(pentapeptide) pyrophosphoryl-undecaprenol N-acetylglucosamine transferase from Aromatoleum aromaticum (strain DSM 19018 / LMG 30748 / EbN1) (Azoarcus sp. (strain EbN1)).